Here is a 433-residue protein sequence, read N- to C-terminus: MASLTTALPNKAVVAHFMMGLTYNYAQSDFQNDIQNAISLGLDGFVLNFGNDSWMMSKLTLMYNAADALNLQFLLYLNLDMSEMSTVPASTLVTYVQTFANRGHQARINNNVVVGTFLGQDINFGQSSVNQGWQVAFKNALASAGINIFFMPTWPLDASTIYQTYPVADGFCKWNCWPYYTSSPTSDAEDLVYIQNSKATNKKYMATVSPIFYTHFTSKNYSFFSEGLWFTRWMQLIKDQPNYVQVLTWNDYGESTYIGPTNYAADFPVIGSNSHEWVDSFTHAPLSYSLPLFIQMYKQNTTGLPSNFSGISQLYVTYRVHSKNATASSDSIPRPDNYQNSSDVISVISFAKSSYTLRVSVNGTVLGTTNVNAGVQSANVSFIVNNTAAAGLPLFQILNGTTVIAQGYGPLNILGNNSVVLYNFNFCTTRISW.

The protein belongs to the glycosyl hydrolase 71 family.

The protein localises to the ascus epiplasm. It carries out the reaction Endohydrolysis of (1-&gt;3)-alpha-D-glucosidic linkages in isolichenin, pseudonigeran and nigeran.. Its function is as follows. Promotes the release of ascospores from asci by hydrolyzing 1,3-alpha-glucan in the ascus wall. This is Ascus wall endo-1,3-alpha-glucanase from Schizosaccharomyces pombe (strain 972 / ATCC 24843) (Fission yeast).